A 227-amino-acid chain; its full sequence is 7-cyano-7-deazaguanine synthase (227 aa).

16–26 is an ATP binding site; the sequence is FSGGQDSTTCL. Zn(2+) contacts are provided by Cys-194, Cys-202, Cys-205, and Cys-208.

The protein belongs to the QueC family. Zn(2+) serves as cofactor.

It catalyses the reaction 7-carboxy-7-deazaguanine + NH4(+) + ATP = 7-cyano-7-deazaguanine + ADP + phosphate + H2O + H(+). Its pathway is purine metabolism; 7-cyano-7-deazaguanine biosynthesis. Its function is as follows. Catalyzes the ATP-dependent conversion of 7-carboxy-7-deazaguanine (CDG) to 7-cyano-7-deazaguanine (preQ(0)). In Haemophilus influenzae (strain PittEE), this protein is 7-cyano-7-deazaguanine synthase.